A 97-amino-acid chain; its full sequence is Small ribosomal subunit protein uS19 (97 aa).

The protein belongs to the universal ribosomal protein uS19 family.

Functionally, protein S19 forms a complex with S13 that binds strongly to the 16S ribosomal RNA. This Pelagibacter ubique (strain HTCC1062) protein is Small ribosomal subunit protein uS19.